A 496-amino-acid polypeptide reads, in one-letter code: Glutathione reductase, cytosolic (496 aa).

FAD is bound by residues Ser-32, Gly-33, Glu-52, Thr-69, Cys-70, and Lys-78. Ser-32 lines the glutathione pocket. Cysteines 70 and 75 form a disulfide. Residue Tyr-127 participates in glutathione binding. Residue Gly-143 coordinates FAD. Residues Gly-208, Ile-211, Glu-214, Arg-231, Arg-237, and Gly-294 each contribute to the NADP(+) site. FAD-binding residues include Asp-335 and Thr-343. NADP(+) is bound at residue Ala-373. His-469 lines the FAD pocket. The active-site Proton acceptor is His-469.

It belongs to the class-I pyridine nucleotide-disulfide oxidoreductase family. In terms of assembly, homodimer. The cofactor is FAD.

It localises to the cytoplasm. The catalysed reaction is 2 glutathione + NADP(+) = glutathione disulfide + NADPH + H(+). Its function is as follows. Catalyzes the reduction of glutathione disulfide (GSSG) to reduced glutathione (GSH). Constitutes the major mechanism to maintain a high GSH:GSSG ratio in the cytosol. This is Glutathione reductase, cytosolic (GRC2) from Oryza sativa subsp. japonica (Rice).